The sequence spans 364 residues: Chorismate synthase (364 aa).

Arg48 contributes to the NADP(+) binding site. Residues 131 to 133 (RAS), 243 to 244 (NA), Gly288, 303 to 307 (KPTSS), and Arg329 contribute to the FMN site.

Belongs to the chorismate synthase family. Homotetramer. Requires FMNH2 as cofactor.

It carries out the reaction 5-O-(1-carboxyvinyl)-3-phosphoshikimate = chorismate + phosphate. It functions in the pathway metabolic intermediate biosynthesis; chorismate biosynthesis; chorismate from D-erythrose 4-phosphate and phosphoenolpyruvate: step 7/7. Functionally, catalyzes the anti-1,4-elimination of the C-3 phosphate and the C-6 proR hydrogen from 5-enolpyruvylshikimate-3-phosphate (EPSP) to yield chorismate, which is the branch point compound that serves as the starting substrate for the three terminal pathways of aromatic amino acid biosynthesis. This reaction introduces a second double bond into the aromatic ring system. The chain is Chorismate synthase from Bartonella bacilliformis (strain ATCC 35685 / KC583 / Herrer 020/F12,63).